Consider the following 751-residue polypeptide: Cyanobacterial phytochrome B (751 aa).

Cys17 lines the a tetrapyrrole pocket. The tract at residues 22 to 511 (IHIPGLIQPH…RSAIIGIVLQ (490 aa)) is chromophore binding domain. Residues 152–320 (TTTEISQILA…MTSVEMSAKE (169 aa)) enclose the GAF domain. The region spanning 536 to 751 (IASHDLKEPL…STFYFTLQDV (216 aa)) is the Histidine kinase domain. His539 is subject to Phosphohistidine; by autocatalysis.

The protein in the N-terminal section; belongs to the phytochrome family. Contains one covalently linked tetrapyrrole chromophore.

It carries out the reaction ATP + protein L-histidine = ADP + protein N-phospho-L-histidine.. Photoreceptor which exists in two forms that are reversibly interconvertible by light: the R form that absorbs maximally in the red region of the spectrum and the FR form that absorbs maximally in the far-red region. In Nostoc sp. (strain PCC 7120 / SAG 25.82 / UTEX 2576), this protein is Cyanobacterial phytochrome B (bphB).